A 266-amino-acid chain; its full sequence is Putative pyruvate, phosphate dikinase regulatory protein (266 aa).

149-156 contributes to the ADP binding site; sequence GVSRTSKT.

The protein belongs to the pyruvate, phosphate/water dikinase regulatory protein family. PDRP subfamily.

It carries out the reaction N(tele)-phospho-L-histidyl/L-threonyl-[pyruvate, phosphate dikinase] + ADP = N(tele)-phospho-L-histidyl/O-phospho-L-threonyl-[pyruvate, phosphate dikinase] + AMP + H(+). The enzyme catalyses N(tele)-phospho-L-histidyl/O-phospho-L-threonyl-[pyruvate, phosphate dikinase] + phosphate + H(+) = N(tele)-phospho-L-histidyl/L-threonyl-[pyruvate, phosphate dikinase] + diphosphate. Its function is as follows. Bifunctional serine/threonine kinase and phosphorylase involved in the regulation of the pyruvate, phosphate dikinase (PPDK) by catalyzing its phosphorylation/dephosphorylation. This is Putative pyruvate, phosphate dikinase regulatory protein from Geobacillus thermodenitrificans (strain NG80-2).